Consider the following 882-residue polypeptide: Piwi-like protein 3 (882 aa).

A compositionally biased stretch (basic residues) spans 1–15 (MPGRARTRARGRARR). The tract at residues 1–91 (MPGRARTRAR…EAGLHTAPLQ (91 aa)) is disordered. Polar residues predominate over residues 32–46 (SATTQEPPQLQSTPR). The PAZ domain maps to 293–406 (TAYDFIKRTS…LIPQLCHMTG (114 aa)). The region spanning 578–868 (KVICILPNDD…LAYLVGQSIH (291 aa)) is the Piwi domain.

The protein belongs to the argonaute family. Piwi subfamily. Expressed in testis.

It is found in the cytoplasm. May play a role during spermatogenesis by repressing transposable elements and preventing their mobilization, which is essential for the germline integrity. Acts via the piRNA metabolic process, which mediates the repression of transposable elements during meiosis by forming complexes composed of piRNAs and Piwi proteins and govern the methylation and subsequent repression of transposons. Directly binds piRNAs, a class of 24 to 30 nucleotide RNAs that are generated by a Dicer-independent mechanism and are primarily derived from transposons and other repeated sequence elements. Besides their function in transposable elements repression, piRNAs are probably involved in other processes during meiosis such as translation regulation. This Homo sapiens (Human) protein is Piwi-like protein 3 (PIWIL3).